Consider the following 884-residue polypeptide: Formin-like protein 9 (884 aa).

An N-terminal signal peptide occupies residues Met1–Leu19. Residues Ile140–Phe160 traverse the membrane as a helical segment. Disordered stretches follow at residues Phe179 to Leu204, Thr295 to Lys318, and Thr403 to Arg473. Residues Ser300–Asp310 show a composition bias toward low complexity. Residues Lys429–Asn443 are compositionally biased toward pro residues. The 421-residue stretch at Val464 to Lys884 folds into the FH2 domain.

Belongs to the formin-like family. Class-I subfamily.

The protein localises to the membrane. In Oryza sativa subsp. indica (Rice), this protein is Formin-like protein 9 (FH9).